The primary structure comprises 119 residues: Large ribosomal subunit protein bL20 (119 aa).

This sequence belongs to the bacterial ribosomal protein bL20 family.

Its function is as follows. Binds directly to 23S ribosomal RNA and is necessary for the in vitro assembly process of the 50S ribosomal subunit. It is not involved in the protein synthesizing functions of that subunit. This Albidiferax ferrireducens (strain ATCC BAA-621 / DSM 15236 / T118) (Rhodoferax ferrireducens) protein is Large ribosomal subunit protein bL20.